The sequence spans 399 residues: Formaldehyde dismutase (399 aa).

Residue Cys-46 participates in Zn(2+) binding. An NAD(+)-binding site is contributed by 47-51 (GSDQH). Zn(2+) contacts are provided by His-67, Cys-97, Cys-100, Cys-103, Cys-111, and Asp-170. NAD(+) is bound at residue Thr-174. Residue His-177 coordinates Zn(2+). NAD(+) contacts are provided by residues 197–198 (PV), 218–219 (DQ), Arg-223, Val-263, His-268, Pro-299, 299–301 (PGI), and 336–338 (GMA).

It belongs to the zinc-containing alcohol dehydrogenase family. Homotetramer. Zn(2+) is required as a cofactor. NAD(+) serves as cofactor. Requires NADH as cofactor.

The enzyme catalyses 2 formaldehyde + H2O = methanol + formate + H(+). With respect to regulation, inhibited by the substrate analog pyrazole but not by NAD analogs such as AMP, ADP, ATP or N-methylnicotinamide chloride. In terms of biological role, active against a range of primary alcohols as well as some secondary alcohols. Exhibits higher activity against alcohols with longer carbon chains. This is Formaldehyde dismutase from Pseudomonas putida (Arthrobacter siderocapsulatus).